The sequence spans 88 residues: Small ribosomal subunit protein uS17 (88 aa).

It belongs to the universal ribosomal protein uS17 family. Part of the 30S ribosomal subunit.

Its function is as follows. One of the primary rRNA binding proteins, it binds specifically to the 5'-end of 16S ribosomal RNA. The protein is Small ribosomal subunit protein uS17 of Prochlorococcus marinus (strain MIT 9301).